The following is a 196-amino-acid chain: ATP-dependent Clp protease proteolytic subunit (196 aa).

Ser-101 functions as the Nucleophile in the catalytic mechanism. Residue His-126 is part of the active site.

Belongs to the peptidase S14 family. Component of the chloroplastic Clp protease core complex.

The protein localises to the plastid. The protein resides in the chloroplast stroma. The enzyme catalyses Hydrolysis of proteins to small peptides in the presence of ATP and magnesium. alpha-casein is the usual test substrate. In the absence of ATP, only oligopeptides shorter than five residues are hydrolyzed (such as succinyl-Leu-Tyr-|-NHMec, and Leu-Tyr-Leu-|-Tyr-Trp, in which cleavage of the -Tyr-|-Leu- and -Tyr-|-Trp bonds also occurs).. Its function is as follows. Cleaves peptides in various proteins in a process that requires ATP hydrolysis. Has a chymotrypsin-like activity. Plays a major role in the degradation of misfolded proteins. The polypeptide is ATP-dependent Clp protease proteolytic subunit (Citrus sinensis (Sweet orange)).